We begin with the raw amino-acid sequence, 42 residues long: Photosystem I reaction center subunit IX (42 aa).

The chain crosses the membrane as a helical span at residues 7-27 (YLSAAPVLSTLWLGALAALLI).

It belongs to the PsaJ family.

Its subcellular location is the plastid membrane. Its function is as follows. May help in the organization of the PsaE and PsaF subunits. This Cuscuta reflexa (Southern Asian dodder) protein is Photosystem I reaction center subunit IX.